The sequence spans 231 residues: Large ribosomal subunit protein uL1 (231 aa).

It belongs to the universal ribosomal protein uL1 family. Part of the 50S ribosomal subunit.

Its function is as follows. Binds directly to 23S rRNA. The L1 stalk is quite mobile in the ribosome, and is involved in E site tRNA release. Functionally, protein L1 is also a translational repressor protein, it controls the translation of the L11 operon by binding to its mRNA. The protein is Large ribosomal subunit protein uL1 of Clostridium kluyveri (strain NBRC 12016).